Here is a 221-residue protein sequence, read N- to C-terminus: Orotate phosphoribosyltransferase (221 aa).

K26 contributes to the 5-phospho-alpha-D-ribose 1-diphosphate binding site. Position 34–35 (34–35 (FF)) interacts with orotate. Residues 72–73 (YK), R98, K99, K102, H104, and 123–131 (DDVISAGTS) each bind 5-phospho-alpha-D-ribose 1-diphosphate. Residues S127 and R155 each coordinate orotate.

This sequence belongs to the purine/pyrimidine phosphoribosyltransferase family. PyrE subfamily. Homodimer. Mg(2+) is required as a cofactor.

The enzyme catalyses orotidine 5'-phosphate + diphosphate = orotate + 5-phospho-alpha-D-ribose 1-diphosphate. Its pathway is pyrimidine metabolism; UMP biosynthesis via de novo pathway; UMP from orotate: step 1/2. Functionally, catalyzes the transfer of a ribosyl phosphate group from 5-phosphoribose 1-diphosphate to orotate, leading to the formation of orotidine monophosphate (OMP). The polypeptide is Orotate phosphoribosyltransferase (Herminiimonas arsenicoxydans).